The sequence spans 482 residues: Protein trichome birefringence-like 15 (482 aa).

A helical; Signal-anchor for type II membrane protein transmembrane segment spans residues 109 to 129 (GSVSLSLIILILLVTTLLVSA). Residues 217–219 (GDS) carry the GDS motif motif. The DCXHWCLPGXXDXWN motif signature appears at 461–475 (DCLHWCLPGIPDTWN).

Belongs to the PC-esterase family. TBL subfamily.

Its subcellular location is the membrane. Its function is as follows. May act as a bridging protein that binds pectin and other cell wall polysaccharides. Probably involved in maintaining esterification of pectins. May be involved in the specific O-acetylation of cell wall polymers. The polypeptide is Protein trichome birefringence-like 15 (TBL15) (Arabidopsis thaliana (Mouse-ear cress)).